Here is a 334-residue protein sequence, read N- to C-terminus: DNA-directed RNA polymerase subunit alpha (334 aa).

Residues 1–234 are alpha N-terminal domain (alpha-NTD); sequence MQRSVHELLT…QQLAVFVDFD (234 aa). Residues 248–334 are alpha C-terminal domain (alpha-CTD); the sequence is IDPILLRPVD…LRGDDRVLGG (87 aa).

This sequence belongs to the RNA polymerase alpha chain family. Homodimer. The RNAP catalytic core consists of 2 alpha, 1 beta, 1 beta' and 1 omega subunit. When a sigma factor is associated with the core the holoenzyme is formed, which can initiate transcription.

It catalyses the reaction RNA(n) + a ribonucleoside 5'-triphosphate = RNA(n+1) + diphosphate. DNA-dependent RNA polymerase catalyzes the transcription of DNA into RNA using the four ribonucleoside triphosphates as substrates. The sequence is that of DNA-directed RNA polymerase subunit alpha from Marinobacter nauticus (strain ATCC 700491 / DSM 11845 / VT8) (Marinobacter aquaeolei).